Consider the following 496-residue polypeptide: Pre-glycoprotein polyprotein GP complex (496 aa).

Residue Gly2 is the site of N-myristoyl glycine; by host attachment. Residues 2-17 lie on the Extracellular side of the membrane; that stretch reads GQLISFFQEIPVFLQE. A helical transmembrane segment spans residues 18-32; that stretch reads ALNIALVAVSLIAVI. A topological domain (cytoplasmic) is located at residue Lys33. A helical membrane pass occupies residues 34-53; the sequence is GIINLYKSGLFQFIFFLLLA. Extracellular loops occupy residues 54-58 and 59-435; these read GRSCS and DGTF…TLVD. Cys57 lines the Zn(2+) pocket. Residues Asn83, Asn95, Asn137, Asn166, and Asn178 are each glycosylated (N-linked (GlcNAc...) asparagine; by host). 6 disulfide bridges follow: Cys92–Cys237, Cys135–Cys164, Cys207–Cys213, Cys282–Cys295, Cys304–Cys313, and Cys367–Cys388. N-linked (GlcNAc...) asparagine; by host glycosylation is found at Asn368, Asn376, Asn393, and Asn398. A helical membrane pass occupies residues 436-456; the sequence is ICFWSTVFFTASLFLHLVGIP. The Cytoplasmic portion of the chain corresponds to 457-496; it reads THRHLKGEACPLPHKLDSFGGCRCGKYPRLRKPTIWHKRH. Residues His458, His460, Cys466, His470, Cys478, Cys480, and His496 each contribute to the Zn(2+) site.

The protein belongs to the arenaviridae GPC protein family. Homotetramer; disulfide-linked. Interacts with host TFRC. In terms of assembly, homotetramer. GP2 homotetramers bind through ionic interactions with GP1 homotetramers to form the GP complex together with the stable signal peptide. The GP-C polyprotein interacts with the host protease MBTPS1/SKI-1 resulting in the polyprotein processing. Post-translationally, specific enzymatic cleavages in vivo yield mature proteins. GP-C polyprotein is cleaved in the endoplasmic reticulum by the host protease MBTPS1. Only cleaved glycoprotein is incorporated into virions. The SSP remains stably associated with the GP complex following cleavage by signal peptidase and plays crucial roles in the trafficking of GP through the secretory pathway. In terms of processing, myristoylation is necessary for GP2-mediated fusion activity.

It is found in the virion membrane. The protein localises to the host endoplasmic reticulum membrane. It localises to the host Golgi apparatus membrane. Its subcellular location is the host cell membrane. Functionally, class I viral fusion protein that directs fusion of viral and host endosomal membranes, leading to delivery of the nucleocapsid into the cytoplasm. Membrane fusion is mediated by irreversible conformational changes induced upon acidification in the endosome. Its function is as follows. Stable signal peptide (SSP): cleaved and functions as a signal peptide. In addition, it is also retained as the third component of the GP complex. The SSP is required for efficient glycoprotein expression, post-translational maturation cleavage of GP1 and GP2, glycoprotein transport to the cell surface plasma membrane, formation of infectious virus particles, and acid pH-dependent glycoprotein-mediated cell fusion. Interacts with the host receptor. Mediates virus attachment to host TFRC. This attachment induces virion internalization predominantly through clathrin-mediated endocytosis. The polypeptide is Pre-glycoprotein polyprotein GP complex (Machupo virus (MACV)).